The following is a 457-amino-acid chain: Siroheme synthase (457 aa).

The segment at 1–204 (MEIFPISLKL…DNLDIANQMM (204 aa)) is precorrin-2 dehydrogenase /sirohydrochlorin ferrochelatase. Residues 22–23 (HI) and 43–44 (PD) contribute to the NAD(+) site. A Phosphoserine modification is found at Ser129. The uroporphyrinogen-III C-methyltransferase stretch occupies residues 216 to 457 (GEVYLVGAGP…VSLREQLQWL (242 aa)). Residue Pro225 participates in S-adenosyl-L-methionine binding. The active-site Proton acceptor is the Asp248. Residue Lys270 is the Proton donor of the active site. Residues 301 to 303 (GGD), Ile306, 331 to 332 (TA), Met383, and Gly412 contribute to the S-adenosyl-L-methionine site.

The protein in the N-terminal section; belongs to the precorrin-2 dehydrogenase / sirohydrochlorin ferrochelatase family. This sequence in the C-terminal section; belongs to the precorrin methyltransferase family.

It carries out the reaction uroporphyrinogen III + 2 S-adenosyl-L-methionine = precorrin-2 + 2 S-adenosyl-L-homocysteine + H(+). The catalysed reaction is precorrin-2 + NAD(+) = sirohydrochlorin + NADH + 2 H(+). It catalyses the reaction siroheme + 2 H(+) = sirohydrochlorin + Fe(2+). Its pathway is cofactor biosynthesis; adenosylcobalamin biosynthesis; precorrin-2 from uroporphyrinogen III: step 1/1. It participates in cofactor biosynthesis; adenosylcobalamin biosynthesis; sirohydrochlorin from precorrin-2: step 1/1. The protein operates within porphyrin-containing compound metabolism; siroheme biosynthesis; precorrin-2 from uroporphyrinogen III: step 1/1. It functions in the pathway porphyrin-containing compound metabolism; siroheme biosynthesis; siroheme from sirohydrochlorin: step 1/1. Its pathway is porphyrin-containing compound metabolism; siroheme biosynthesis; sirohydrochlorin from precorrin-2: step 1/1. In terms of biological role, multifunctional enzyme that catalyzes the SAM-dependent methylations of uroporphyrinogen III at position C-2 and C-7 to form precorrin-2 via precorrin-1. Then it catalyzes the NAD-dependent ring dehydrogenation of precorrin-2 to yield sirohydrochlorin. Finally, it catalyzes the ferrochelation of sirohydrochlorin to yield siroheme. This is Siroheme synthase from Acinetobacter baylyi (strain ATCC 33305 / BD413 / ADP1).